The following is a 386-amino-acid chain: MTLPVWVAAAARAATEALLGRPFSAFQLLELPDRDEPFAVSVTSAAVLAGGEQALSISHCDPGPGLDLTRGLEIWVCVQWQELVVGVDDELNVHSEAWLNLVAGKGVGTLGSGGEACVSRFARELLSRNLYPLVPSGRGLRLEVVLPRGRDLAARTSNAAFGVVDGLALIGTQADVQVSASPDQLQQTIEQLRRQSAASDFCGAMTLVIGENGLDLARQLGLAVQPLLKIGNWLGPVIVAAAEAGVEQLLLLGYHGKLVKLAGGIFHTHHHLADGRLEVLAAMAVREGLPLDLIRQLGQADSMEAALKMLEAQDPELVRKLWYRLAATVEHRSAAYLARYGSWSIAIGAALFDRQRRLRWAGPQGSQQLAVLGVTPEDSPISLSLP.

This sequence belongs to the CbiD family.

The catalysed reaction is Co-precorrin-5B + S-adenosyl-L-methionine = Co-precorrin-6A + S-adenosyl-L-homocysteine. Its pathway is cofactor biosynthesis; adenosylcobalamin biosynthesis; cob(II)yrinate a,c-diamide from sirohydrochlorin (anaerobic route): step 6/10. Functionally, catalyzes the methylation of C-1 in cobalt-precorrin-5B to form cobalt-precorrin-6A. This chain is Cobalt-precorrin-5B C(1)-methyltransferase, found in Prochlorococcus marinus (strain MIT 9303).